We begin with the raw amino-acid sequence, 1700 residues long: Ras-responsive element-binding protein 1 (1700 aa).

Positions T31 to K63 are disordered. A phosphoserine mark is found at S36 and S42. 3 C2H2-type zinc fingers span residues Y66 to H88, H97 to H119, and Y125 to H147. Residues I146–S195 are disordered. S161 bears the Phosphoserine mark. Over residues L163–L174 the composition is skewed to basic residues. Phosphoserine is present on residues S175 and S180. Positions G184 to S195 are enriched in basic and acidic residues. A C2H2-type 4 zinc finger spans residues F206 to H228. Position 229 is a phosphoserine (S229). 2 consecutive C2H2-type zinc fingers follow at residues L233–H256 and F314–H336. Residues K433, K500, K549, K564, K591, and K611 each participate in a glycyl lysine isopeptide (Lys-Gly) (interchain with G-Cter in SUMO2) cross-link. A Glycyl lysine isopeptide (Lys-Gly) (interchain with G-Cter in SUMO1); alternate cross-link involves residue K613. K613 is covalently cross-linked (Glycyl lysine isopeptide (Lys-Gly) (interchain with G-Cter in SUMO2); alternate). K622 participates in a covalent cross-link: Glycyl lysine isopeptide (Lys-Gly) (interchain with G-Cter in SUMO2). 5 consecutive C2H2-type zinc fingers follow at residues Y641–H663, Y669–H691, Y697–H720, T751–H782, and F788–H813. Glycyl lysine isopeptide (Lys-Gly) (interchain with G-Cter in SUMO2) cross-links involve residues K855, K883, and K911. Disordered regions lie at residues I939–T991 and A1092–L1177. The span at K944–P961 shows a compositional bias: basic and acidic residues. S970 is subject to Phosphoserine. The segment covering S1097–S1111 has biased composition (polar residues). Phosphoserine occurs at positions 1125, 1137, and 1138. Positions S1137–E1146 are enriched in low complexity. The span at S1155 to R1165 shows a compositional bias: basic residues. Phosphoserine is present on residues S1172, S1179, S1180, and S1230. Disordered stretches follow at residues T1195 to R1235, H1273 to D1368, S1383 to V1521, and V1564 to A1670. A C2H2-type 12 zinc finger spans residues I1251–H1273. The segment covering H1273 to T1285 has biased composition (low complexity). Residues S1327–R1346 show a composition bias toward acidic residues. The segment at H1400–H1422 adopts a C2H2-type 13 zinc-finger fold. 2 positions are modified to phosphoserine: S1450 and S1452. Over residues T1492–S1507 the composition is skewed to basic and acidic residues. C2H2-type zinc fingers lie at residues K1520–H1542 and Y1548–H1570. Residues V1564–G1580 show a composition bias toward basic residues. A phosphoserine mark is found at S1593 and S1606. Positions A1645 to P1660 are enriched in low complexity. S1667 carries the post-translational modification Phosphoserine.

The protein belongs to the krueppel C2H2-type zinc-finger protein family. As to quaternary structure, interacts with NEUROD1. Interacts with AR. Expressed in splenic B-cells.

Its subcellular location is the nucleus speckle. Its function is as follows. Transcription factor that binds specifically to the RAS-responsive elements (RRE) of gene promoters. Represses the angiotensinogen gene. Negatively regulates the transcriptional activity of AR. Potentiates the transcriptional activity of NEUROD1. Binds specifically to the allelic variant of the CDKN2A promoter present in Balb/c mice, which leads to a down-regulation of CDKN2A expression in this strain, and, as a consequence, to an elevated susceptibility to pristane-induced tumors. Promotes brown adipocyte differentiation. May be involved in Ras/Raf-mediated cell differentiation by enhancing calcitonin expression. In Mus musculus (Mouse), this protein is Ras-responsive element-binding protein 1 (Rreb1).